The chain runs to 561 residues: MPESKLNSPLRYHGIYNAPHRAFLRSVGLTDGEINKPLVAVATAWSEAGPCNFHTLSLAHVAKEGAKEGGLTPLAFPTIVVNDNIGMGTEGMRYSLVSRDLIADMVEAQFNAHAFDALIGIGGCDKTTPGILMAMARLNVPSIYIYGGSAEPGFYLGRRLTIEDVHEAIGAFIAGKIDEHELYEIEKRAHPTVGTCSGMFTANTMGSMSEALGMALPGSASPTATSSRRIMYVRETGKAVSRLLENGVKSRDILTFEAFENAIAVLMAMGGSTNAVLHLLAIAYEAGVKLTLDDFNRISKRTPYIGSLKPGGDYVMADLDEVGGVPLVMKKLLDAGLLNGDVLTVTGKTMKQNLQEYRIPNVPHNHIVKDVKNPIKPRGGIVILKGSLAPEGAVIKVAATNVTKFEGKAKVYNSEEQAFKGIQSNEVKDGEVVVIRYEGPKGGPGMPEMLRVTAAIVGAGLSNVAMVTDGRFSGATRGPMVGHVAPEAMVGGPIAIVEDGDVIVIDVENERLDIKLSDAEIKRRLNNWSPPEPRYKSGLLAKYASLVAQSSMGAVTRPVIK.

Cysteine 51 serves as a coordination point for [2Fe-2S] cluster. Aspartate 83 lines the Mg(2+) pocket. Residue cysteine 124 coordinates [2Fe-2S] cluster. Mg(2+) is bound by residues aspartate 125 and lysine 126. Lysine 126 is subject to N6-carboxylysine. Cysteine 196 is a [2Fe-2S] cluster binding site. Glutamate 448 contributes to the Mg(2+) binding site. The Proton acceptor role is filled by serine 473.

The protein belongs to the IlvD/Edd family. Homodimer. The cofactor is [2Fe-2S] cluster. Mg(2+) serves as cofactor.

The catalysed reaction is (2R)-2,3-dihydroxy-3-methylbutanoate = 3-methyl-2-oxobutanoate + H2O. The enzyme catalyses (2R,3R)-2,3-dihydroxy-3-methylpentanoate = (S)-3-methyl-2-oxopentanoate + H2O. Its pathway is amino-acid biosynthesis; L-isoleucine biosynthesis; L-isoleucine from 2-oxobutanoate: step 3/4. The protein operates within amino-acid biosynthesis; L-valine biosynthesis; L-valine from pyruvate: step 3/4. Its function is as follows. Functions in the biosynthesis of branched-chain amino acids. Catalyzes the dehydration of (2R,3R)-2,3-dihydroxy-3-methylpentanoate (2,3-dihydroxy-3-methylvalerate) into 2-oxo-3-methylpentanoate (2-oxo-3-methylvalerate) and of (2R)-2,3-dihydroxy-3-methylbutanoate (2,3-dihydroxyisovalerate) into 2-oxo-3-methylbutanoate (2-oxoisovalerate), the penultimate precursor to L-isoleucine and L-valine, respectively. This Sulfolobus acidocaldarius (strain ATCC 33909 / DSM 639 / JCM 8929 / NBRC 15157 / NCIMB 11770) protein is Dihydroxy-acid dehydratase.